Reading from the N-terminus, the 161-residue chain is Regulator of ribonuclease activity A (161 aa).

The protein belongs to the RraA family. As to quaternary structure, homotrimer. Binds to both RNA-binding sites in the C-terminal region of Rne and to RhlB.

It localises to the cytoplasm. Functionally, globally modulates RNA abundance by binding to RNase E (Rne) and regulating its endonucleolytic activity. Can modulate Rne action in a substrate-dependent manner by altering the composition of the degradosome. Modulates RNA-binding and helicase activities of the degradosome. The chain is Regulator of ribonuclease activity A from Shewanella denitrificans (strain OS217 / ATCC BAA-1090 / DSM 15013).